Consider the following 442-residue polypeptide: Tryptophan synthase beta chain 2 (442 aa).

The residue at position 122 (Lys-122) is an N6-(pyridoxal phosphate)lysine.

Belongs to the TrpB family. In terms of assembly, tetramer of two alpha and two beta chains. Requires pyridoxal 5'-phosphate as cofactor.

It carries out the reaction (1S,2R)-1-C-(indol-3-yl)glycerol 3-phosphate + L-serine = D-glyceraldehyde 3-phosphate + L-tryptophan + H2O. It participates in amino-acid biosynthesis; L-tryptophan biosynthesis; L-tryptophan from chorismate: step 5/5. Its function is as follows. The beta subunit is responsible for the synthesis of L-tryptophan from indole and L-serine. This Methanosarcina acetivorans (strain ATCC 35395 / DSM 2834 / JCM 12185 / C2A) protein is Tryptophan synthase beta chain 2 (trpB2).